The primary structure comprises 228 residues: Urease accessory protein UreF (228 aa).

Belongs to the UreF family. In terms of assembly, ureD, UreF and UreG form a complex that acts as a GTP-hydrolysis-dependent molecular chaperone, activating the urease apoprotein by helping to assemble the nickel containing metallocenter of UreC. The UreE protein probably delivers the nickel.

It localises to the cytoplasm. Its function is as follows. Required for maturation of urease via the functional incorporation of the urease nickel metallocenter. The sequence is that of Urease accessory protein UreF from Yersinia pseudotuberculosis serotype IB (strain PB1/+).